Reading from the N-terminus, the 792-residue chain is Phosphoenolpyruvate synthase (792 aa).

The active-site Tele-phosphohistidine intermediate is the histidine 421. Substrate is bound by residues arginine 511, arginine 578, glutamate 680, glycine 701, serine 702, asparagine 703, and aspartate 704. Glutamate 680 provides a ligand contact to Mg(2+). Mg(2+) is bound at residue aspartate 704. Catalysis depends on cysteine 751, which acts as the Proton donor.

The protein belongs to the PEP-utilizing enzyme family. As to quaternary structure, homodimer. The cofactor is Mg(2+).

The catalysed reaction is pyruvate + ATP + H2O = phosphoenolpyruvate + AMP + phosphate + 2 H(+). Its pathway is carbohydrate biosynthesis; gluconeogenesis. Activated by a Pi-dependent pyrophosphorylation and inactivated by an ADP-dependent phosphorylation on a regulatory threonine. Both reactions are mediated by the bifunctional serine/threonine kinase and phosphorylase PpsR. In terms of biological role, catalyzes the phosphorylation of pyruvate to phosphoenolpyruvate. This is Phosphoenolpyruvate synthase (ppsA) from Escherichia coli (strain K12).